The chain runs to 1997 residues: Autophagy-related protein 2 homolog A (1997 aa).

A Chorein N-terminal domain is found at 17-119 (CRYLLQHYLG…RGAAQGTESQ (103 aa)). 5 disordered regions span residues 241-281 (TSVQ…IQQI), 1292-1323 (HCPP…CLPA), 1371-1414 (EEIK…TDTD), 1492-1534 (SSRP…TQGG), and 1684-1718 (RLDG…SSTD). Pro residues predominate over residues 1311–1321 (PEGPSSLPPCL). Polar residues-rich tracts occupy residues 1393–1408 (RVSQ…SGDS), 1493–1532 (SRPN…WRTQ), and 1690–1718 (KSSS…SSTD).

The protein belongs to the ATG2 family.

Its subcellular location is the preautophagosomal structure membrane. The protein localises to the lipid droplet. The protein resides in the endoplasmic reticulum membrane. The enzyme catalyses a 1,2-diacyl-sn-glycero-3-phospho-L-serine(in) = a 1,2-diacyl-sn-glycero-3-phospho-L-serine(out). It catalyses the reaction a 1,2-diacyl-sn-glycero-3-phosphoethanolamine(in) = a 1,2-diacyl-sn-glycero-3-phosphoethanolamine(out). Its function is as follows. Lipid transfer protein involved in autophagosome assembly. Tethers the edge of the isolation membrane (IM) to the endoplasmic reticulum (ER) and mediates direct lipid transfer from ER to IM for IM expansion. Binds to the ER exit site (ERES), which is the membrane source for autophagosome formation, and extracts phospholipids from the membrane source and transfers them to atg9 (atg9a or atg9b) to the IM for membrane expansion. Also regulates lipid droplets morphology and distribution within the cell. The chain is Autophagy-related protein 2 homolog A from Xenopus tropicalis (Western clawed frog).